A 753-amino-acid chain; its full sequence is 5-methyltetrahydropteroyltriglutamate--homocysteine methyltransferase (753 aa).

Residues 17 to 20 and lysine 117 contribute to the 5-methyltetrahydropteroyltri-L-glutamate site; that span reads RELK. L-homocysteine-binding positions include 431-433 and glutamate 484; that span reads IGS. L-methionine-binding positions include 431–433 and glutamate 484; that span reads IGS. 5-methyltetrahydropteroyltri-L-glutamate is bound by residues 515 to 516 and tryptophan 561; that span reads RC. Residue aspartate 599 coordinates L-homocysteine. Aspartate 599 contributes to the L-methionine binding site. 5-methyltetrahydropteroyltri-L-glutamate is bound at residue glutamate 605. Positions 641, 643, and 665 each coordinate Zn(2+). Histidine 694 functions as the Proton donor in the catalytic mechanism. Cysteine 726 is a binding site for Zn(2+).

The protein belongs to the vitamin-B12 independent methionine synthase family. In terms of assembly, monomer. Zn(2+) is required as a cofactor.

It catalyses the reaction 5-methyltetrahydropteroyltri-L-glutamate + L-homocysteine = tetrahydropteroyltri-L-glutamate + L-methionine. The protein operates within amino-acid biosynthesis; L-methionine biosynthesis via de novo pathway; L-methionine from L-homocysteine (MetE route): step 1/1. Catalyzes the transfer of a methyl group from 5-methyltetrahydrofolate to homocysteine resulting in methionine formation. This chain is 5-methyltetrahydropteroyltriglutamate--homocysteine methyltransferase, found in Escherichia coli (strain K12).